Reading from the N-terminus, the 692-residue chain is MARTIPLEKVRNIGIAAHIDAGKTTTTERILFYSGIIHKIGEVHEGTAVTDWMEQERERGITITAAAISTSWKDHQINIIDTPGHVDFTIEVERSMRVLDGVIAVFCSVGGVQPQSETVWRQAERYKVPRIAFINKMDRTGANFYKVHEQIRDRLRANAIAIQLPIGSENDFQGIVDLVRQRAYIYANDQGTDIQETDIPEELQAQVDEFRTKLIEAAAETDDALMAKYFEGEELTEQEIRTALRKGTIAGTIVPVLCGSAFKNKGVQLMLDAVVDYLPAPSEVPPIQGLLPNGDTIERRADDNEPLAALAFKIMADPYGRLTFVRVYSGVLKKGSYVLNASKNKKERISRLVLMKADDRQDVDELRAGDLGAALGLKDTLTGDTLCDDGSPVILESLFIPEPVISVAVEPKTKNDMDKLSKALQSLSEEDPTFRVRVDPETNQTVIAGMGELHLEILVDRMLREFKVEANVGAPQVAYRETIRKAVNKVEGKFIRQSGGKGQYGHVVINLEPGEPGTGFEFVSKIAGGTVPKEYVGPAEQGMKESCESGVLAGYPLIDVKATLIDGSYHDVDSSEMAFKIAGSMAMKEAVLKASPVILEPMMKVEVEVPEDYMGNVIGDLNTRRGQIESQSTEKGLAKVTSKVPLASMFGYATDIRSKTQGRGTFTMEFSHYEEVPRSVAETIIAKSKGNA.

The region spanning 8-282 (EKVRNIGIAA…AVVDYLPAPS (275 aa)) is the tr-type G domain. GTP contacts are provided by residues 17 to 24 (AHIDAGKT), 81 to 85 (DTPGH), and 135 to 138 (NKMD).

It belongs to the TRAFAC class translation factor GTPase superfamily. Classic translation factor GTPase family. EF-G/EF-2 subfamily.

The protein resides in the cytoplasm. In terms of biological role, catalyzes the GTP-dependent ribosomal translocation step during translation elongation. During this step, the ribosome changes from the pre-translocational (PRE) to the post-translocational (POST) state as the newly formed A-site-bound peptidyl-tRNA and P-site-bound deacylated tRNA move to the P and E sites, respectively. Catalyzes the coordinated movement of the two tRNA molecules, the mRNA and conformational changes in the ribosome. The polypeptide is Elongation factor G (Nostoc punctiforme (strain ATCC 29133 / PCC 73102)).